We begin with the raw amino-acid sequence, 292 residues long: Cholesterol ring-cleaving hydrolase IpdA subunit (292 aa).

It belongs to the 3-oxoacid CoA-transferase subunit A family. Heterotetramer composed of 2 IpdA subunits and 2 IpdB subunits.

The catalysed reaction is (3E)-2-(2-carboxylatoethyl)-3-methyl-6-oxocyclohex-1-ene-1-carboxyl-CoA + H2O = 6-methyl-3,7-dioxodecanedioyl-CoA. It functions in the pathway steroid metabolism; cholesterol degradation. Its function is as follows. Involved in the final steps of cholesterol and steroid degradation. Opens the last steroid ring of cholesterol by catalyzing the hydrolysis of (3E)-2-(2-carboxylatoethyl)-3-methyl-6-oxocyclohex-1-ene-1-carboxyl-CoA (COCHEA-CoA) to 6-methyl-3,7-dioxodecanedioyl-CoA (MeDODA-CoA). The sequence is that of Cholesterol ring-cleaving hydrolase IpdA subunit from Mycobacterium tuberculosis (strain CDC 1551 / Oshkosh).